The sequence spans 194 residues: FMN-dependent NADH:quinone oxidoreductase (194 aa).

Residues S10 and 90–93 contribute to the FMN site; that span reads MYNL.

This sequence belongs to the azoreductase type 1 family. As to quaternary structure, homodimer. FMN serves as cofactor.

It carries out the reaction 2 a quinone + NADH + H(+) = 2 a 1,4-benzosemiquinone + NAD(+). The enzyme catalyses N,N-dimethyl-1,4-phenylenediamine + anthranilate + 2 NAD(+) = 2-(4-dimethylaminophenyl)diazenylbenzoate + 2 NADH + 2 H(+). Its function is as follows. Quinone reductase that provides resistance to thiol-specific stress caused by electrophilic quinones. Functionally, also exhibits azoreductase activity. Catalyzes the reductive cleavage of the azo bond in aromatic azo compounds to the corresponding amines. This is FMN-dependent NADH:quinone oxidoreductase from Haemophilus influenzae (strain 86-028NP).